The chain runs to 209 residues: uncharacterized protein (209 aa).

It localises to the plastid. It is found in the chloroplast. This is an uncharacterized protein from Porphyra purpurea (Red seaweed).